Reading from the N-terminus, the 142-residue chain is Coactosin-like protein (142 aa).

Ala2 is modified (N-acetylalanine). Residues 2–130 (ATKIDKEACR…EEDFIRSELK (129 aa)) enclose the ADF-H domain. Residues 66–75 (TGDAMSKRSK) are flexible and important for F-actin binding. Lys102 is subject to N6-acetyllysine. Phosphoserine is present on Ser141.

This sequence belongs to the actin-binding proteins ADF family. Coactosin subfamily. In terms of assembly, interacts with 5-lipoxygenase (ALOX5/5LO) in a calcium-independent manner. Binds to F-actin with a stoichiometry of 1:2.

It localises to the cytoplasm. The protein localises to the cytoskeleton. The protein resides in the nucleus. In terms of biological role, binds to F-actin in a calcium-independent manner. Has no direct effect on actin depolymerization. Acts as a chaperone for ALOX5 (5LO), influencing both its stability and activity in leukotrienes synthesis. In Mus musculus (Mouse), this protein is Coactosin-like protein (Cotl1).